Here is a 62-residue protein sequence, read N- to C-terminus: Photosystem II reaction center protein Z (62 aa).

The next 2 membrane-spanning stretches (helical) occupy residues 8–28 and 41–61; these read AVFALIATSSLLLISVPVVFA and FSGTSLWIGLVFLVGILNSLI.

The protein belongs to the PsbZ family. PSII is composed of 1 copy each of membrane proteins PsbA, PsbB, PsbC, PsbD, PsbE, PsbF, PsbH, PsbI, PsbJ, PsbK, PsbL, PsbM, PsbT, PsbY, PsbZ, Psb30/Ycf12, at least 3 peripheral proteins of the oxygen-evolving complex and a large number of cofactors. It forms dimeric complexes.

It localises to the plastid. The protein localises to the chloroplast thylakoid membrane. Functionally, may control the interaction of photosystem II (PSII) cores with the light-harvesting antenna, regulates electron flow through the 2 photosystem reaction centers. PSII is a light-driven water plastoquinone oxidoreductase, using light energy to abstract electrons from H(2)O, generating a proton gradient subsequently used for ATP formation. The protein is Photosystem II reaction center protein Z of Oenothera elata subsp. hookeri (Hooker's evening primrose).